The sequence spans 154 residues: 6,7-dimethyl-8-ribityllumazine synthase (154 aa).

5-amino-6-(D-ribitylamino)uracil contacts are provided by residues phenylalanine 22, 56–58 (AFE), and 80–82 (AVI). Residue 85-86 (AT) coordinates (2S)-2-hydroxy-3-oxobutyl phosphate. The active-site Proton donor is histidine 88. Phenylalanine 113 is a binding site for 5-amino-6-(D-ribitylamino)uracil. Residue arginine 127 coordinates (2S)-2-hydroxy-3-oxobutyl phosphate.

It belongs to the DMRL synthase family. Forms an icosahedral capsid composed of 60 subunits, arranged as a dodecamer of pentamers.

The enzyme catalyses (2S)-2-hydroxy-3-oxobutyl phosphate + 5-amino-6-(D-ribitylamino)uracil = 6,7-dimethyl-8-(1-D-ribityl)lumazine + phosphate + 2 H2O + H(+). The protein operates within cofactor biosynthesis; riboflavin biosynthesis; riboflavin from 2-hydroxy-3-oxobutyl phosphate and 5-amino-6-(D-ribitylamino)uracil: step 1/2. Functionally, catalyzes the formation of 6,7-dimethyl-8-ribityllumazine by condensation of 5-amino-6-(D-ribitylamino)uracil with 3,4-dihydroxy-2-butanone 4-phosphate. This is the penultimate step in the biosynthesis of riboflavin. The sequence is that of 6,7-dimethyl-8-ribityllumazine synthase from Geobacillus sp. (strain WCH70).